Here is a 60-residue protein sequence, read N- to C-terminus: Cytotoxin 2a (60 aa).

4 cysteine pairs are disulfide-bonded: cysteine 3-cysteine 21, cysteine 14-cysteine 38, cysteine 42-cysteine 53, and cysteine 54-cysteine 59.

The protein belongs to the three-finger toxin family. Short-chain subfamily. Type IA cytotoxin sub-subfamily. In terms of assembly, monomer in solution; Homodimer and oligomer in the presence of negatively charged lipids forming a pore with a size ranging between 20 and 30 Angstroms. In terms of tissue distribution, expressed by the venom gland.

It is found in the secreted. It localises to the target cell membrane. Shows cytolytic activity on many different cells by forming pore in lipid membranes. In vivo, increases heart rate or kills the animal by cardiac arrest. In addition, it binds to heparin with high affinity, interacts with Kv channel-interacting protein 1 (KCNIP1) in a calcium-independent manner, and binds to integrin alpha-V/beta-3 (ITGAV/ITGB3) with moderate affinity. Preferentially binds acidic phospholipids like phosphatidylserine, phosphatidic acid and phosphatidyl glycerol. Has hemolytic activity towards human erythrocytes (EC(50)=1.024 uM) and cytolytic activity towards various cell lines. This Naja naja (Indian cobra) protein is Cytotoxin 2a.